A 255-amino-acid polypeptide reads, in one-letter code: 5'-nucleotidase SurE (255 aa).

Residues Asp-8, Asp-9, Ser-40, and Asn-93 each coordinate a divalent metal cation.

Belongs to the SurE nucleotidase family. A divalent metal cation serves as cofactor.

The protein localises to the cytoplasm. It carries out the reaction a ribonucleoside 5'-phosphate + H2O = a ribonucleoside + phosphate. In terms of biological role, nucleotidase that shows phosphatase activity on nucleoside 5'-monophosphates. In Azorhizobium caulinodans (strain ATCC 43989 / DSM 5975 / JCM 20966 / LMG 6465 / NBRC 14845 / NCIMB 13405 / ORS 571), this protein is 5'-nucleotidase SurE.